The chain runs to 935 residues: Auxin response factor 6 (935 aa).

Positions 129–231 (FCKTLTASDT…QLLLGIRRAN (103 aa)) form a DNA-binding region, TF-B3. Disordered stretches follow at residues 536-624 (QAYL…PLHT) and 645-714 (SAMT…SASD). Low complexity-rich tracts occupy residues 546–565 (QPQS…QQQQ) and 573–582 (SASSAAVVSA). 2 stretches are compositionally biased toward polar residues: residues 583-624 (MSQF…PLHT) and 661-689 (SSFQ…SNVP). Residues 796–880 (NTFVKVYKSG…WCIKILSPQE (85 aa)) form the PB1 domain. The span at 896-909 (PSSNNVDKLPSNGN) shows a compositional bias: polar residues. Residues 896 to 917 (PSSNNVDKLPSNGNCDDFGNRS) form a disordered region.

This sequence belongs to the ARF family. As to quaternary structure, homodimers and heterodimers. As to expression, expressed in the whole plant.

The protein resides in the nucleus. Auxin response factors (ARFs) are transcriptional factors that bind specifically to the DNA sequence 5'-TGTCTC-3' found in the auxin-responsive promoter elements (AuxREs). Seems to act as transcriptional activator. Formation of heterodimers with Aux/IAA proteins may alter their ability to modulate early auxin response genes expression. Regulates both stamen and gynoecium maturation. Promotes jasmonic acid production. Partially redundant with ARF8. The polypeptide is Auxin response factor 6 (ARF6) (Arabidopsis thaliana (Mouse-ear cress)).